The following is a 368-amino-acid chain: (3S,6E)-nerolidol synthase (368 aa).

The Mg(2+) site is built by D91, N228, and S232. The DDXXE motif signature appears at 91–95 (DDLLE).

It belongs to the terpene synthase family. The cofactor is Mg(2+). Mn(2+) is required as a cofactor.

It carries out the reaction (2E,6E)-farnesyl diphosphate + H2O = (3S,6E)-nerolidol + diphosphate. The catalysed reaction is (2E)-geranyl diphosphate + H2O = (S)-linalool + diphosphate. The protein operates within secondary metabolite biosynthesis; terpenoid biosynthesis. In terms of biological role, sesquiterpene synthase converting farnesyl diphosphate to nerolidol. Also has a monoterpene synthase activity, converting geranyl diphosphate into linalool as the major product. Has no diterpene synthase activity. The chain is (3S,6E)-nerolidol synthase from Selaginella moellendorffii (Spikemoss).